We begin with the raw amino-acid sequence, 292 residues long: Undecaprenyl-diphosphatase (292 aa).

7 helical membrane-spanning segments follow: residues 1 to 21 (MSLV…FLPV), 46 to 66 (FVTI…RADI), 90 to 110 (LGWY…LLEH), 114 to 134 (ALGN…LLAA), 192 to 212 (FLLS…STVP), 225 to 245 (VVGT…LLAW), and 253 to 273 (VFVV…LSGV).

The protein belongs to the UppP family.

The protein localises to the cell inner membrane. It catalyses the reaction di-trans,octa-cis-undecaprenyl diphosphate + H2O = di-trans,octa-cis-undecaprenyl phosphate + phosphate + H(+). Catalyzes the dephosphorylation of undecaprenyl diphosphate (UPP). Confers resistance to bacitracin. This is Undecaprenyl-diphosphatase from Anaeromyxobacter dehalogenans (strain 2CP-1 / ATCC BAA-258).